The following is a 144-amino-acid chain: Ig heavy chain V region MOPC 141 (144 aa).

A signal peptide spans 1–19; that stretch reads MAVLALLFCLATFPSCILS. The 111-residue stretch at 20–130 folds into the Ig-like domain; it reads QVQLKESGPG…YYGRSDKYFT (111 aa).

The chain is Ig heavy chain V region MOPC 141 from Mus musculus (Mouse).